Here is a 176-residue protein sequence, read N- to C-terminus: CDP-archaeol synthase (176 aa).

The next 4 helical transmembrane spans lie at 41-61 (GLIGGIVVGIIFGLMQIFLYN), 73-93 (IITVCALATGALLGDMVKSYF), 114-134 (VVGSLVLMTLALLVTGNLNWF), and 138-158 (FDSVGFLIATIIAILILSPLL).

It belongs to the CDP-archaeol synthase family. The cofactor is Mg(2+).

It is found in the cell membrane. It catalyses the reaction 2,3-bis-O-(geranylgeranyl)-sn-glycerol 1-phosphate + CTP + H(+) = CDP-2,3-bis-O-(geranylgeranyl)-sn-glycerol + diphosphate. It participates in membrane lipid metabolism; glycerophospholipid metabolism. In terms of biological role, catalyzes the formation of CDP-2,3-bis-(O-geranylgeranyl)-sn-glycerol (CDP-archaeol) from 2,3-bis-(O-geranylgeranyl)-sn-glycerol 1-phosphate (DGGGP) and CTP. This reaction is the third ether-bond-formation step in the biosynthesis of archaeal membrane lipids. The sequence is that of CDP-archaeol synthase from Methanocorpusculum labreanum (strain ATCC 43576 / DSM 4855 / Z).